A 464-amino-acid chain; its full sequence is Hepatocyte nuclear factor 4-alpha (464 aa).

The segment at residues 57–132 (NSLCAICGDR…AGMKKEAVQN (76 aa)) is a DNA-binding region (nuclear receptor). 2 NR C4-type zinc fingers span residues 60-80 (CAIC…CDGC) and 96-120 (CRFS…LKKC). An NR LBD domain is found at 147–376 (SSLPSINVLI…NLLQEMLLGG (230 aa)). A 9aaTAD motif is present at residues 367 to 375 (NLLQEMLLG). A compositionally biased stretch (polar residues) spans 410 to 421 (SQLHNGQMSTPE). The tract at residues 410 to 433 (SQLHNGQMSTPETPQPSPPAGSGA) is disordered.

It belongs to the nuclear hormone receptor family. NR2 subfamily. Homodimerization is required for HNF4-alpha to bind to its recognition site. Expressed in liver and kidney.

Its subcellular location is the nucleus. Functionally, transcriptional regulator; binds and activates the promoter for the HNF1-alpha gene. Potential initiator of a transcriptional cascade within a subset of cells committed to a specific developmental program. Could be a determinant for asymmetry in early development. May play a role in the regulation of the circadian clock. The polypeptide is Hepatocyte nuclear factor 4-alpha (hnf4a) (Xenopus laevis (African clawed frog)).